The chain runs to 64 residues: Large ribosomal subunit protein bL33 (64 aa).

The span at 16–25 (EARTSSEPRR) shows a compositional bias: basic and acidic residues. Residues 16 to 39 (EARTSSEPRRSNGISRYTTEKNKR) form a disordered region.

This sequence belongs to the bacterial ribosomal protein bL33 family.

The sequence is that of Large ribosomal subunit protein bL33 from Prochlorococcus marinus (strain MIT 9515).